The chain runs to 184 residues: ATP-dependent protease subunit HslV (184 aa).

Thr-12 is a catalytic residue. Na(+) contacts are provided by Ala-166, Cys-169, and Thr-172.

This sequence belongs to the peptidase T1B family. HslV subfamily. As to quaternary structure, a double ring-shaped homohexamer of HslV is capped on each side by a ring-shaped HslU homohexamer. The assembly of the HslU/HslV complex is dependent on binding of ATP.

The protein resides in the cytoplasm. It catalyses the reaction ATP-dependent cleavage of peptide bonds with broad specificity.. Its activity is regulated as follows. Allosterically activated by HslU binding. In terms of biological role, protease subunit of a proteasome-like degradation complex believed to be a general protein degrading machinery. This Brucella melitensis biotype 1 (strain ATCC 23456 / CCUG 17765 / NCTC 10094 / 16M) protein is ATP-dependent protease subunit HslV.